The sequence spans 654 residues: Fructose-1,6-bisphosphatase class 3 (654 aa).

This sequence belongs to the FBPase class 3 family. The cofactor is Mn(2+).

It catalyses the reaction beta-D-fructose 1,6-bisphosphate + H2O = beta-D-fructose 6-phosphate + phosphate. It functions in the pathway carbohydrate biosynthesis; gluconeogenesis. The chain is Fructose-1,6-bisphosphatase class 3 from Staphylococcus haemolyticus (strain JCSC1435).